The sequence spans 254 residues: 3-deoxy-manno-octulosonate cytidylyltransferase (254 aa).

The protein belongs to the KdsB family.

Its subcellular location is the cytoplasm. The catalysed reaction is 3-deoxy-alpha-D-manno-oct-2-ulosonate + CTP = CMP-3-deoxy-beta-D-manno-octulosonate + diphosphate. The protein operates within nucleotide-sugar biosynthesis; CMP-3-deoxy-D-manno-octulosonate biosynthesis; CMP-3-deoxy-D-manno-octulosonate from 3-deoxy-D-manno-octulosonate and CTP: step 1/1. It functions in the pathway bacterial outer membrane biogenesis; lipopolysaccharide biosynthesis. Functionally, activates KDO (a required 8-carbon sugar) for incorporation into bacterial lipopolysaccharide in Gram-negative bacteria. This chain is 3-deoxy-manno-octulosonate cytidylyltransferase, found in Chlamydia trachomatis serovar A (strain ATCC VR-571B / DSM 19440 / HAR-13).